We begin with the raw amino-acid sequence, 315 residues long: Aspartate carbamoyltransferase catalytic subunit (315 aa).

Residues R61 and T62 each contribute to the carbamoyl phosphate site. K90 is an L-aspartate binding site. Carbamoyl phosphate is bound by residues R111, H139, and Q142. 2 residues coordinate L-aspartate: R172 and R234. Positions 274 and 275 each coordinate carbamoyl phosphate.

This sequence belongs to the aspartate/ornithine carbamoyltransferase superfamily. ATCase family. Heterooligomer of catalytic and regulatory chains.

The catalysed reaction is carbamoyl phosphate + L-aspartate = N-carbamoyl-L-aspartate + phosphate + H(+). Its pathway is pyrimidine metabolism; UMP biosynthesis via de novo pathway; (S)-dihydroorotate from bicarbonate: step 2/3. Functionally, catalyzes the condensation of carbamoyl phosphate and aspartate to form carbamoyl aspartate and inorganic phosphate, the committed step in the de novo pyrimidine nucleotide biosynthesis pathway. The chain is Aspartate carbamoyltransferase catalytic subunit from Hyperthermus butylicus (strain DSM 5456 / JCM 9403 / PLM1-5).